The primary structure comprises 419 residues: UDP-N-acetylglucosamine 1-carboxyvinyltransferase 2 (419 aa).

A phosphoenolpyruvate-binding site is contributed by 24–25 (KN). R94 is a UDP-N-acetyl-alpha-D-glucosamine binding site. Catalysis depends on C118, which acts as the Proton donor. At C118 the chain carries 2-(S-cysteinyl)pyruvic acid O-phosphothioketal. UDP-N-acetyl-alpha-D-glucosamine is bound by residues 123–127 (RPIDQ), D307, and I329.

The protein belongs to the EPSP synthase family. MurA subfamily.

It localises to the cytoplasm. The enzyme catalyses phosphoenolpyruvate + UDP-N-acetyl-alpha-D-glucosamine = UDP-N-acetyl-3-O-(1-carboxyvinyl)-alpha-D-glucosamine + phosphate. Its pathway is cell wall biogenesis; peptidoglycan biosynthesis. Cell wall formation. Adds enolpyruvyl to UDP-N-acetylglucosamine. This is UDP-N-acetylglucosamine 1-carboxyvinyltransferase 2 from Staphylococcus epidermidis (strain ATCC 35984 / DSM 28319 / BCRC 17069 / CCUG 31568 / BM 3577 / RP62A).